Consider the following 571-residue polypeptide: Glutamate--tRNA ligase (571 aa).

The segment covering 75–88 has biased composition (basic and acidic residues); it reads GGPREDVARDKEGL. Residues 75-98 form a disordered region; it reads GGPREDVARDKEGLKPLPGAEPGN. The 'HIGH' region motif lies at 105-115; it reads PNPSGPLHIGH.

This sequence belongs to the class-I aminoacyl-tRNA synthetase family. Glutamate--tRNA ligase type 2 subfamily.

Its subcellular location is the cytoplasm. The enzyme catalyses tRNA(Glu) + L-glutamate + ATP = L-glutamyl-tRNA(Glu) + AMP + diphosphate. Functionally, catalyzes the attachment of glutamate to tRNA(Glu) in a two-step reaction: glutamate is first activated by ATP to form Glu-AMP and then transferred to the acceptor end of tRNA(Glu). The sequence is that of Glutamate--tRNA ligase from Methanopyrus kandleri (strain AV19 / DSM 6324 / JCM 9639 / NBRC 100938).